We begin with the raw amino-acid sequence, 1813 residues long: Nonribosomal peptide synthetase 1 (1813 aa).

The tract at residues 89–494 is adenylation; that stretch reads EKARRDPSRQ…GRGDQQVKLR (406 aa). Positions 624 to 699 constitute a Carrier 1 domain; it reads EPQSERERQL…ELAITLKHSD (76 aa). Residue S660 is modified to O-(pantetheine 4'-phosphoryl)serine. The interval 738–1159 is condensation 1; that stretch reads DVYPCTTLQE…LPMTDDELAE (422 aa). One can recognise a Carrier 2 domain in the interval 1282–1358; that stretch reads QVTTPKQQKL…DMADIAKESL (77 aa). The residue at position 1319 (S1319) is an O-(pantetheine 4'-phosphoryl)serine. The condensation 2 stretch occupies residues 1427–1806; it reads FYLDAAVDQS…STLFQTDVME (380 aa).

Belongs to the NRP synthetase family.

The protein operates within siderophore biosynthesis. Functionally, nonribosomal peptide synthetase; part of the gene cluster that mediates the biosynthesis of hydroxamate-containing siderophores that play a critical role in virulence via intracellular iron acquisition during macrophage infection. This chain is Nonribosomal peptide synthetase 1, found in Ajellomyces capsulatus (Darling's disease fungus).